A 121-amino-acid chain; its full sequence is MFLLPKYNSFFIFLLLASVIPILAFSISKFLAPNNTQGPEKLTSYESGIEPMGDAWIQFQIRYYMFALVFVIFDVETVFLYPWAMSFNDLGLSAFIEALVFVFILIIGLVYAWRKGALEWS.

A run of 3 helical transmembrane segments spans residues 10-30 (FFIF…ISKF), 65-85 (MFAL…PWAM), and 90-110 (LGLS…IGLV).

This sequence belongs to the complex I subunit 3 family. NDH is composed of at least 16 different subunits, 5 of which are encoded in the nucleus.

The protein localises to the plastid. The protein resides in the chloroplast thylakoid membrane. The catalysed reaction is a plastoquinone + NADH + (n+1) H(+)(in) = a plastoquinol + NAD(+) + n H(+)(out). The enzyme catalyses a plastoquinone + NADPH + (n+1) H(+)(in) = a plastoquinol + NADP(+) + n H(+)(out). Its function is as follows. NDH shuttles electrons from NAD(P)H:plastoquinone, via FMN and iron-sulfur (Fe-S) centers, to quinones in the photosynthetic chain and possibly in a chloroplast respiratory chain. The immediate electron acceptor for the enzyme in this species is believed to be plastoquinone. Couples the redox reaction to proton translocation, and thus conserves the redox energy in a proton gradient. This chain is NAD(P)H-quinone oxidoreductase subunit 3, chloroplastic, found in Physcomitrium patens (Spreading-leaved earth moss).